Here is a 321-residue protein sequence, read N- to C-terminus: Transmembrane protein fend (321 aa).

The first 18 residues, 1–18 (MFHSLVLMACALAALSVA), serve as a signal peptide directing secretion. Residues 19 to 261 (QGAGSARSKS…ALPTPSELGG (243 aa)) are Extracellular-facing. The helical transmembrane segment at 262–282 (VVYPAFGALAFFLALLVMFLF) threads the bilayer. Residues 283 to 321 (LRPQRKRFPLDADSADTATLIGRSSSSSRNSMDASTLHV) are Cytoplasmic-facing.

Its subcellular location is the membrane. In terms of biological role, involved in the normal targeting of ventral muscle, muscle 12, by motoneurons. May function as an axon guidance molecule involved in neuromuscular specificity. The protein is Transmembrane protein fend (fend) of Drosophila melanogaster (Fruit fly).